We begin with the raw amino-acid sequence, 401 residues long: Tumor necrosis factor receptor superfamily member 11B (401 aa).

The N-terminal stretch at 1–21 (MNKWLCCALLVFLDIIEWTTQ) is a signal peptide. TNFR-Cys repeat units follow at residues 24-62 (FPPK…KTLC), 65-105 (CPDY…NRVC), 107-142 (CEEG…NTVC), and 145-185 (CPDG…DNVC). 8 cysteine pairs are disulfide-bonded: Cys41/Cys54, Cys44/Cys62, Cys65/Cys80, Cys83/Cys97, Cys87/Cys105, Cys107/Cys118, Cys124/Cys142, and Cys145/Cys160. A glycan (N-linked (GlcNAc...) asparagine) is linked at Asn98. Asn165 and Asn178 each carry an N-linked (GlcNAc...) asparagine glycan. Cys166 and Cys185 are disulfide-bonded. 2 consecutive Death domains span residues 198–269 (DVTL…MVKK) and 270–365 (IIQD…THSL). Asn289 is a glycosylation site (N-linked (GlcNAc...) asparagine).

Homodimer. Interacts with TNFSF10 and TNFSF11.

The protein resides in the secreted. Functionally, acts as a decoy receptor for TNFSF11/RANKL and thereby neutralizes its function in osteoclastogenesis. Inhibits the activation of osteoclasts and promotes osteoclast apoptosis in vitro. Bone homeostasis seems to depend on the local ratio between TNFSF11 and TNFRSF11B. May also play a role in preventing arterial calcification. May act as decoy receptor for TNFSF10/TRAIL and protect against apoptosis. TNFSF10/TRAIL binding blocks the inhibition of osteoclastogenesis. The protein is Tumor necrosis factor receptor superfamily member 11B (Tnfrsf11b) of Rattus norvegicus (Rat).